Consider the following 487-residue polypeptide: Adenylosuccinate synthetase, chloroplastic (487 aa).

Residues 1-46 (MSLSTVNHAAAAAAAAGSGKSFSAAAPAAPSVRLPRTRAPAAAAVS) constitute a chloroplast transit peptide. GTP is bound by residues 74-80 (GDEGKGK) and 102-104 (GHT). Aspartate 75 serves as the catalytic Proton acceptor. Mg(2+) is bound by residues aspartate 75 and glycine 102. Residues 75 to 78 (DEGK), 100 to 103 (NAGH), threonine 192, arginine 206, glutamine 286, threonine 301, and arginine 365 contribute to the IMP site. Residue histidine 103 is the Proton donor of the active site. Position 361 to 367 (361 to 367 (TTTGRPR)) interacts with substrate. GTP-binding positions include arginine 367, 393-395 (KLD), and 476-478 (GVG).

Belongs to the adenylosuccinate synthetase family. Homodimer. Mg(2+) serves as cofactor.

It localises to the plastid. The protein localises to the chloroplast. It carries out the reaction IMP + L-aspartate + GTP = N(6)-(1,2-dicarboxyethyl)-AMP + GDP + phosphate + 2 H(+). Its pathway is purine metabolism; AMP biosynthesis via de novo pathway; AMP from IMP: step 1/2. Plays an important role in the de novo pathway and in the salvage pathway of purine nucleotide biosynthesis. Catalyzes the first committed step in the biosynthesis of AMP from IMP. In Oryza sativa subsp. indica (Rice), this protein is Adenylosuccinate synthetase, chloroplastic.